Consider the following 233-residue polypeptide: MKSAVLVFPGINRERDMARALKLVSGNDAAMVWHAETELPKGTDLVVVPGGFSYGDYLRCGAIAARAPVMDAVRKFAADGGLVLGVCNGFQILCESGLLPGVLMRNARLKFICRDVHLRVERNDTPFTQGYKAGQVIKVPVAHGEGNYEADEDTVKRLEGDGRVLYRYCSPEGEVGESHNINGAAASIAGIVSERGNVLGMMPHPENHVEDIMGCTDGRGLFAGLAQHLAKAA.

Residues 3 to 233 (SAVLVFPGIN…GLAQHLAKAA (231 aa)) enclose the Glutamine amidotransferase type-1 domain. Catalysis depends on Cys-87, which acts as the Nucleophile. Residues His-204 and Glu-206 contribute to the active site.

Part of the FGAM synthase complex composed of 1 PurL, 1 PurQ and 2 PurS subunits.

It is found in the cytoplasm. The enzyme catalyses N(2)-formyl-N(1)-(5-phospho-beta-D-ribosyl)glycinamide + L-glutamine + ATP + H2O = 2-formamido-N(1)-(5-O-phospho-beta-D-ribosyl)acetamidine + L-glutamate + ADP + phosphate + H(+). The catalysed reaction is L-glutamine + H2O = L-glutamate + NH4(+). It participates in purine metabolism; IMP biosynthesis via de novo pathway; 5-amino-1-(5-phospho-D-ribosyl)imidazole from N(2)-formyl-N(1)-(5-phospho-D-ribosyl)glycinamide: step 1/2. Part of the phosphoribosylformylglycinamidine synthase complex involved in the purines biosynthetic pathway. Catalyzes the ATP-dependent conversion of formylglycinamide ribonucleotide (FGAR) and glutamine to yield formylglycinamidine ribonucleotide (FGAM) and glutamate. The FGAM synthase complex is composed of three subunits. PurQ produces an ammonia molecule by converting glutamine to glutamate. PurL transfers the ammonia molecule to FGAR to form FGAM in an ATP-dependent manner. PurS interacts with PurQ and PurL and is thought to assist in the transfer of the ammonia molecule from PurQ to PurL. This is Phosphoribosylformylglycinamidine synthase subunit PurQ from Rhodopseudomonas palustris (strain ATCC BAA-98 / CGA009).